The chain runs to 90 residues: Signal recognition particle 19 kDa protein (90 aa).

The protein belongs to the SRP19 family. In terms of assembly, part of the signal recognition particle protein translocation system, which is composed of SRP and FtsY. Archaeal SRP consists of a 7S RNA molecule of 300 nucleotides and two protein subunits: SRP54 and SRP19.

Its subcellular location is the cytoplasm. Involved in targeting and insertion of nascent membrane proteins into the cytoplasmic membrane. Binds directly to 7S RNA and mediates binding of the 54 kDa subunit of the SRP. In Methanococcus aeolicus (strain ATCC BAA-1280 / DSM 17508 / OCM 812 / Nankai-3), this protein is Signal recognition particle 19 kDa protein.